The primary structure comprises 83 residues: Small ribosomal subunit protein bS16 (83 aa).

This sequence belongs to the bacterial ribosomal protein bS16 family.

This is Small ribosomal subunit protein bS16 from Shewanella woodyi (strain ATCC 51908 / MS32).